A 443-amino-acid chain; its full sequence is UDP-N-acetylmuramate--L-alanine ligase (443 aa).

110–116 serves as a coordination point for ATP; the sequence is GAHGKTS.

The protein belongs to the MurCDEF family.

The protein resides in the cytoplasm. It catalyses the reaction UDP-N-acetyl-alpha-D-muramate + L-alanine + ATP = UDP-N-acetyl-alpha-D-muramoyl-L-alanine + ADP + phosphate + H(+). It participates in cell wall biogenesis; peptidoglycan biosynthesis. Its function is as follows. Cell wall formation. The chain is UDP-N-acetylmuramate--L-alanine ligase from Streptococcus equi subsp. equi (strain 4047).